Here is a 370-residue protein sequence, read N- to C-terminus: 1-propanol dehydrogenase PduQ (370 aa).

The protein belongs to the iron-containing alcohol dehydrogenase family. Interacts with PduP, probably via the N-terminus of PduQ. Requires Fe cation as cofactor.

The protein resides in the bacterial microcompartment. It catalyses the reaction 1-propanol + NAD(+) = propanal + NADH + H(+). The protein operates within polyol metabolism; 1,2-propanediol degradation. With respect to regulation, enzyme is oxygen sensitive. Functionally, an iron-dependent alcohol dehydrogenase required for optimal 1,2-propanediol (1,2-PD) degradation. NAD(+) and NADH are regenerated internally within the bacterial microcompartment (BMC) dedicated to 1,2-PD degradation by the PduP and PduQ enzymes, which reduce NAD(+) and oxidize NADH respectively, although there must also be cofactor transport across the BMC. Its function is as follows. The 1,2-PD-specific bacterial microcompartment (BMC) concentrates low levels of 1,2-PD catabolic enzymes, concentrates volatile reaction intermediates thus enhancing pathway flux and keeps the level of toxic, mutagenic propionaldehyde low. The polypeptide is 1-propanol dehydrogenase PduQ (Salmonella typhimurium (strain LT2 / SGSC1412 / ATCC 700720)).